The following is an 88-amino-acid chain: Apolipoprotein C-I (88 aa).

A signal peptide spans 1 to 26 (MRLFLSLPVLVVVLAMVLEGPAPAQA).

Belongs to the apolipoprotein C1 family.

It is found in the secreted. Inhibitor of lipoprotein binding to the low density lipoprotein (LDL) receptor, LDL receptor-related protein, and very low density lipoprotein (VLDL) receptor. Associates with high density lipoproteins (HDL) and the triacylglycerol-rich lipoproteins in the plasma and makes up about 10% of the protein of the VLDL and 2% of that of HDL. Appears to interfere directly with fatty acid uptake and is also the major plasma inhibitor of cholesteryl ester transfer protein (CETP). Binds free fatty acids and reduces their intracellular esterification. Modulates the interaction of APOE with beta-migrating VLDL and inhibits binding of beta-VLDL to the LDL receptor-related protein. The sequence is that of Apolipoprotein C-I (APOC1) from Arctocephalus gazella (Antarctic fur seal).